A 253-amino-acid chain; its full sequence is Endonuclease NucS (253 aa).

It belongs to the NucS endonuclease family.

It is found in the cytoplasm. Cleaves both 3' and 5' ssDNA extremities of branched DNA structures. The chain is Endonuclease NucS from Pyrococcus horikoshii (strain ATCC 700860 / DSM 12428 / JCM 9974 / NBRC 100139 / OT-3).